A 149-amino-acid polypeptide reads, in one-letter code: Stathmin (149 aa).

Ala-2 carries the N-acetylalanine modification. A Phosphoserine modification is found at Ser-4. The region spanning 4–145 (SDIQVKELEK…NKESKDPADE (142 aa)) is the SLD domain. Residue Lys-9 is modified to N6-acetyllysine. Position 16 is a phosphoserine (Ser-16). Residue Ser-25 is modified to Phosphoserine; by CDK1, MAPK1 and MAPK3. Lys-29 carries the N6-methyllysine modification. At Ser-31 the chain carries Phosphoserine. A Phosphoserine; by CDK1, MAPK1 and MAPK3 modification is found at Ser-38. Residues 41 to 140 (KKKDLSLEEI…EEVRKNKESK (100 aa)) are a coiled coil. Ser-63 is modified (phosphoserine; by PKA). Residues Lys-100 and Lys-119 each carry the N6-acetyllysine modification. Positions 121-143 (ERLREKDKHIEEVRKNKESKDPA) are enriched in basic and acidic residues. Residues 121–149 (ERLREKDKHIEEVRKNKESKDPADETEAD) are disordered.

Belongs to the stathmin family. In terms of assembly, binds to two alpha/beta-tubulin heterodimers. Interacts with KIST. In terms of processing, many different phosphorylated forms are observed depending on specific combinations among the sites which can be phosphorylated. MAPK is responsible for the phosphorylation of stathmin in response to NGF. Phosphorylation at Ser-16 seems to be required for neuron polarization.

The protein localises to the cytoplasm. It localises to the cytoskeleton. Its function is as follows. Involved in the regulation of the microtubule (MT) filament system by destabilizing microtubules. Prevents assembly and promotes disassembly of microtubules. Its phosphorylation at Ser-16 may be required for axon formation during neurogenesis. Involved in the control of the learned and innate fear. This is Stathmin (STMN1) from Bos taurus (Bovine).